The following is a 149-amino-acid chain: Probable calcium-binding protein CML25/26 (149 aa).

EF-hand domains lie at 1 to 35 (MASSASSVFAAFDKDGDGKVSASELRGCMAAALGE), 37 to 72 (VSEEEAAAILATADTDGDGLLDHHEFMRLSAAHQLQ), 77 to 113 (ESLRCLREAFDMYAEEEETAVITPASLRRMLRRLGSE), and 117 to 149 (LEMEECRAMICRFDLNGDGVLSFDEFRVMMLMA). Ca(2+) is bound by residues D13, D15, D17, K19, E24, D50, D52, D54, and E61. Residues D130, N132, D134, and E141 each coordinate Ca(2+).

In terms of biological role, potential calcium sensor. The protein is Probable calcium-binding protein CML25/26 (CML25) of Oryza sativa subsp. japonica (Rice).